Reading from the N-terminus, the 794-residue chain is Hyaluronan mediated motility receptor (794 aa).

The disordered stretch occupies residues 1–87; sequence MSFPKAPLKR…SQKNDKDVKR (87 aa). Ser20 bears the Phosphoserine mark. The span at 74–87 shows a compositional bias: basic and acidic residues; the sequence is SKKDSQKNDKDVKR. N-linked (GlcNAc...) asparagine glycans are attached at residues Asn134, Asn279, Asn446, Asn467, Asn488, Asn509, Asn530, Asn561, and Asn601. The required for interaction with FAM83D stretch occupies residues 365-630; sequence EEMTSEKNVF…ITDLKNQLRQ (266 aa). 5 tandem repeats follow at residues 442-462, 463-483, 484-504, 505-525, and 526-546. Positions 442 to 546 are 5 X 21 AA tandem repeats; sequence QEKYNDTAQS…RDVTAQLESY (105 aa). 2 hyaluronic acid-binding regions span residues 719 to 729 and 741 to 750; these read KQKIKHVVKLK and KLRSQLVKRK. Thr784 bears the Phosphothreonine mark.

In terms of assembly, interacts with ANKRD26. Interacts with DYNLL1. Interacts with FAM83D/CHICA. In terms of tissue distribution, ubiquitously expressed.

The protein resides in the cell surface. It localises to the cytoplasm. Its subcellular location is the cytoskeleton. The protein localises to the spindle. In terms of biological role, receptor for hyaluronic acid (HA). Involved in cell motility. When hyaluronan binds to HMMR, the phosphorylation of a number of proteins, including the PTK2/FAK1 occurs. May also be involved in cellular transformation and metastasis formation, and in regulating extracellular-regulated kinase (ERK) activity. May act as a regulator of adipogenesis. In Mus musculus (Mouse), this protein is Hyaluronan mediated motility receptor (Hmmr).